A 350-amino-acid chain; its full sequence is RNA 3'-terminal phosphate cyclase (350 aa).

ATP is bound by residues glutamine 100 and 290-294 (FLGDQ). Histidine 314 (tele-AMP-histidine intermediate) is an active-site residue.

The protein belongs to the RNA 3'-terminal cyclase family. Type 1 subfamily.

The protein localises to the cytoplasm. It carries out the reaction a 3'-end 3'-phospho-ribonucleotide-RNA + ATP = a 3'-end 2',3'-cyclophospho-ribonucleotide-RNA + AMP + diphosphate. Its function is as follows. Catalyzes the conversion of 3'-phosphate to a 2',3'-cyclic phosphodiester at the end of RNA. The mechanism of action of the enzyme occurs in 3 steps: (A) adenylation of the enzyme by ATP; (B) transfer of adenylate to an RNA-N3'P to produce RNA-N3'PP5'A; (C) and attack of the adjacent 2'-hydroxyl on the 3'-phosphorus in the diester linkage to produce the cyclic end product. The biological role of this enzyme is unknown but it is likely to function in some aspects of cellular RNA processing. This Thermococcus sibiricus (strain DSM 12597 / MM 739) protein is RNA 3'-terminal phosphate cyclase.